The sequence spans 244 residues: 1-(5-phosphoribosyl)-5-[(5-phosphoribosylamino)methylideneamino] imidazole-4-carboxamide isomerase (244 aa).

Asp-10 functions as the Proton acceptor in the catalytic mechanism. The active-site Proton donor is the Asp-132.

It belongs to the HisA/HisF family.

The protein resides in the cytoplasm. It carries out the reaction 1-(5-phospho-beta-D-ribosyl)-5-[(5-phospho-beta-D-ribosylamino)methylideneamino]imidazole-4-carboxamide = 5-[(5-phospho-1-deoxy-D-ribulos-1-ylimino)methylamino]-1-(5-phospho-beta-D-ribosyl)imidazole-4-carboxamide. The protein operates within amino-acid biosynthesis; L-histidine biosynthesis; L-histidine from 5-phospho-alpha-D-ribose 1-diphosphate: step 4/9. The protein is 1-(5-phosphoribosyl)-5-[(5-phosphoribosylamino)methylideneamino] imidazole-4-carboxamide isomerase of Stenotrophomonas maltophilia (strain R551-3).